A 774-amino-acid polypeptide reads, in one-letter code: Chondroitin sulfate synthase 2 (774 aa).

Residues 1-15 (MRASLLLSVLRPAGP) are Cytoplasmic-facing. The chain crosses the membrane as a helical; Signal-anchor for type II membrane protein span at residues 16–34 (VAVGISLGFTLSLLSVTWV). Residues 35–774 (EEPCGPGPPQ…LFEQEQGNST (740 aa)) lie on the Lumenal side of the membrane. Residues 37 to 103 (PCGPGPPQPG…AQPGQATKKA (67 aa)) form a disordered region. Residues 54–67 (GNTNAARRPNSVQP) show a composition bias toward polar residues. 2 N-linked (GlcNAc...) asparagine glycosylation sites follow: Asn138 and Asn361. Asp616 contacts a divalent metal cation.

This sequence belongs to the chondroitin N-acetylgalactosaminyltransferase family. As to quaternary structure, interacts with PRKN. The cofactor is Mn(2+). Requires Co(2+) as cofactor. In terms of tissue distribution, isoform 1, isoform 2 and isoform 3 are expressed in brain (at protein level).

Its subcellular location is the golgi apparatus. It localises to the golgi stack membrane. It is found in the cytoplasm. The protein resides in the cytosol. The protein localises to the mitochondrion. Its subcellular location is the mitochondrion matrix. The catalysed reaction is 3-O-(beta-D-GlcA-(1-&gt;3)-beta-D-GalNAc-(1-&gt;4)-beta-D-GlcA-(1-&gt;3)-beta-D-Gal-(1-&gt;3)-beta-D-Gal-(1-&gt;4)-beta-D-Xyl)-L-seryl-[protein] + UDP-N-acetyl-alpha-D-galactosamine = 3-O-(beta-D-GalNAc-(1-&gt;4)-beta-D-GlcA-(1-&gt;3)-beta-D-GalNAc-(1-&gt;4)-beta-D-GlcA-(1-&gt;3)-beta-D-Gal-(1-&gt;3)-beta-D-Gal-(1-&gt;4)-beta-D-Xyl)-L-seryl-[protein] + UDP + H(+). It carries out the reaction 3-O-{beta-D-GlcA-(1-&gt;3)-[beta-D-GalNAc-(1-&gt;4)-beta-D-GlcA-(1-&gt;3)](n)-beta-D-GalNAc-(1-&gt;4)-beta-D-GlcA-(1-&gt;3)-beta-D-Gal-(1-&gt;3)-beta-D-Gal-(1-&gt;4)-beta-D-Xyl}-L-seryl-[protein] + UDP-N-acetyl-alpha-D-galactosamine = 3-O-{[beta-D-GalNAc-(1-&gt;4)-beta-D-GlcA-(1-&gt;3)](n+1)-beta-D-GalNAc-(1-&gt;4)-beta-D-GlcA-(1-&gt;3)-beta-D-Gal-(1-&gt;3)-beta-D-Gal-(1-&gt;4)-beta-D-Xyl}-L-seryl-[protein] + UDP + H(+). It catalyses the reaction 3-O-(beta-D-GalNAc-(1-&gt;4)-beta-D-GlcA-(1-&gt;3)-beta-D-Gal-(1-&gt;3)-beta-D-Gal-(1-&gt;4)-beta-D-Xyl)-L-seryl-[protein] + UDP-alpha-D-glucuronate = 3-O-(beta-D-GlcA-(1-&gt;3)-beta-D-GalNAc-(1-&gt;4)-beta-D-GlcA-(1-&gt;3)-beta-D-Gal-(1-&gt;3)-beta-D-Gal-(1-&gt;4)-beta-D-Xyl)-L-seryl-[protein] + UDP + H(+). The enzyme catalyses 3-O-{[beta-D-GalNAc-(1-&gt;4)-beta-D-GlcA-(1-&gt;3)](n)-beta-D-GalNAc-(1-&gt;4)-beta-D-GlcA-(1-&gt;3)-beta-D-Gal-(1-&gt;3)-beta-D-Gal-(1-&gt;4)-beta-D-Xyl}-L-seryl-[protein] + UDP-alpha-D-glucuronate = 3-O-{beta-D-GlcA-(1-&gt;3)-[beta-D-GalNAc-(1-&gt;4)-beta-D-GlcA-(1-&gt;3)](n)-beta-D-GalNAc-(1-&gt;4)-beta-D-GlcA-(1-&gt;3)-beta-D-Gal-(1-&gt;3)-beta-D-Gal-(1-&gt;4)-beta-D-Xyl}-L-seryl-[protein] + UDP + H(+). Its function is as follows. Has both beta-1,3-glucuronic acid and beta-1,4-N-acetylgalactosamine transferase activity. Transfers glucuronic acid (GlcUA) from UDP-GlcUA and N-acetylgalactosamine (GalNAc) from UDP-GalNAc to the non-reducing end of the elongating chondroitin polymer. Seems to act as a specific activating factor for CHSY1 in chondroitin polymerization. May facilitate PRKN transport into the mitochondria. In collaboration with PRKN, may enhance cell viability and protect cells from oxidative stress. The chain is Chondroitin sulfate synthase 2 from Mus musculus (Mouse).